Here is a 289-residue protein sequence, read N- to C-terminus: 4-diphosphocytidyl-2-C-methyl-D-erythritol kinase (289 aa).

Residue lysine 11 is part of the active site. 95 to 105 (PMGGGIGGGSS) is an ATP binding site. Aspartate 137 is an active-site residue.

Belongs to the GHMP kinase family. IspE subfamily.

It carries out the reaction 4-CDP-2-C-methyl-D-erythritol + ATP = 4-CDP-2-C-methyl-D-erythritol 2-phosphate + ADP + H(+). It functions in the pathway isoprenoid biosynthesis; isopentenyl diphosphate biosynthesis via DXP pathway; isopentenyl diphosphate from 1-deoxy-D-xylulose 5-phosphate: step 3/6. Its function is as follows. Catalyzes the phosphorylation of the position 2 hydroxy group of 4-diphosphocytidyl-2C-methyl-D-erythritol. The polypeptide is 4-diphosphocytidyl-2-C-methyl-D-erythritol kinase (Aeromonas hydrophila subsp. hydrophila (strain ATCC 7966 / DSM 30187 / BCRC 13018 / CCUG 14551 / JCM 1027 / KCTC 2358 / NCIMB 9240 / NCTC 8049)).